We begin with the raw amino-acid sequence, 425 residues long: cAMP/cGMP-dependent 3',5'-cAMP/cGMP phosphodiesterase 7 (425 aa).

The signal sequence occupies residues M1 to G17.

This sequence belongs to the cyclic nucleotide phosphodiesterase class-II family.

It localises to the secreted. The protein resides in the extracellular space. The protein localises to the cell surface. The catalysed reaction is 3',5'-cyclic AMP + H2O = AMP + H(+). It catalyses the reaction 3',5'-cyclic GMP + H2O = GMP + H(+). Its activity is regulated as follows. Inhibited by dithiotreitol (DTT). In terms of biological role, phosphodiesterase with dual cAMP/cGMP specificity. However, displays a preference for cAMP over cGMP. Seems to regulate cAMP/cGMP concentration especially during cell aggregation. This Dictyostelium discoideum (Social amoeba) protein is cAMP/cGMP-dependent 3',5'-cAMP/cGMP phosphodiesterase 7 (pde7).